A 142-amino-acid chain; its full sequence is Transcriptional regulator MraZ (142 aa).

SpoVT-AbrB domains follow at residues 5-47 (EYNH…PLGE) and 76-119 (ANEV…SKEK).

The protein belongs to the MraZ family. Forms oligomers.

The protein localises to the cytoplasm. Its subcellular location is the nucleoid. This is Transcriptional regulator MraZ from Clostridium acetobutylicum (strain ATCC 824 / DSM 792 / JCM 1419 / IAM 19013 / LMG 5710 / NBRC 13948 / NRRL B-527 / VKM B-1787 / 2291 / W).